Here is a 489-residue protein sequence, read N- to C-terminus: Glycogen synthase (489 aa).

Position 18 (Lys18) interacts with ADP-alpha-D-glucose.

The protein belongs to the glycosyltransferase 1 family. Bacterial/plant glycogen synthase subfamily.

The enzyme catalyses [(1-&gt;4)-alpha-D-glucosyl](n) + ADP-alpha-D-glucose = [(1-&gt;4)-alpha-D-glucosyl](n+1) + ADP + H(+). It participates in glycan biosynthesis; glycogen biosynthesis. In terms of biological role, synthesizes alpha-1,4-glucan chains using ADP-glucose. This is Glycogen synthase from Rhodopseudomonas palustris (strain BisA53).